The primary structure comprises 318 residues: NADH-ubiquinone oxidoreductase chain 1 (318 aa).

8 consecutive transmembrane segments (helical) span residues 2 to 22 (FMINLLLTIVPILLAVAFLTL), 68 to 88 (ITMFIIAPILALTLALTMWTP), 100 to 120 (LGVLFMLAMSSLAVYSILWSG), 146 to 166 (LAIILLSVLLLSGSFALPALI), 171 to 191 (HMWLIIPSWPLAMMWFISTLA), 222 to 242 (LFFLAEYANIIMMNIFTTILF), 253 to 273 (ELYTINFALKATLLTISFLWV), and 294 to 314 (LPLTLALCMWHVTMPIITAGI).

The protein belongs to the complex I subunit 1 family.

It localises to the mitochondrion inner membrane. The catalysed reaction is a ubiquinone + NADH + 5 H(+)(in) = a ubiquinol + NAD(+) + 4 H(+)(out). Functionally, core subunit of the mitochondrial membrane respiratory chain NADH dehydrogenase (Complex I) that is believed to belong to the minimal assembly required for catalysis. Complex I functions in the transfer of electrons from NADH to the respiratory chain. The immediate electron acceptor for the enzyme is believed to be ubiquinone. This chain is NADH-ubiquinone oxidoreductase chain 1 (MT-ND1), found in Coelops frithii (East Asian tailless leaf-nosed bat).